Here is a 502-residue protein sequence, read N- to C-terminus: ATP synthase subunit alpha (502 aa).

Residue 169 to 176 coordinates ATP; sequence GDRQTGKT.

The protein belongs to the ATPase alpha/beta chains family. In terms of assembly, F-type ATPases have 2 components, CF(1) - the catalytic core - and CF(0) - the membrane proton channel. CF(1) has five subunits: alpha(3), beta(3), gamma(1), delta(1), epsilon(1). CF(0) has three main subunits: a(1), b(2) and c(9-12). The alpha and beta chains form an alternating ring which encloses part of the gamma chain. CF(1) is attached to CF(0) by a central stalk formed by the gamma and epsilon chains, while a peripheral stalk is formed by the delta and b chains.

The protein resides in the cell inner membrane. It catalyses the reaction ATP + H2O + 4 H(+)(in) = ADP + phosphate + 5 H(+)(out). Produces ATP from ADP in the presence of a proton gradient across the membrane. The alpha chain is a regulatory subunit. The protein is ATP synthase subunit alpha of Nitratidesulfovibrio vulgaris (strain DSM 19637 / Miyazaki F) (Desulfovibrio vulgaris).